Here is a 461-residue protein sequence, read N- to C-terminus: Probable carboxypeptidase MGYG_04702 (461 aa).

Residues 1–20 (MQKTYLLALVSLLASSLVEA) form the signal peptide. Residues Asn48 and Asn99 are each glycosylated (N-linked (GlcNAc...) asparagine). Asp176 contributes to the Zn(2+) binding site. The active-site Proton acceptor is Glu208. Position 209 (Glu209) interacts with Zn(2+). N-linked (GlcNAc...) asparagine glycosylation occurs at Asn396.

The protein belongs to the peptidase M20A family. The cofactor is Zn(2+).

The protein resides in the secreted. The polypeptide is Probable carboxypeptidase MGYG_04702 (Arthroderma gypseum (strain ATCC MYA-4604 / CBS 118893) (Microsporum gypseum)).